The primary structure comprises 84 residues: Mitochondrial import inner membrane translocase subunit Tim9 (84 aa).

Positions 36–60 (CFQSCITNFRIRKLDDEEQLCVYKC) match the Twin CX3C motif motif. Intrachain disulfides connect Cys-36–Cys-60 and Cys-40–Cys-56.

It belongs to the small Tim family. Heterohexamer; composed of 3 copies of timm9 and 3 copies of timm10, named soluble 70 kDa complex. Associates directly with the TIM22 complex, whose core is composed of timm22. Interacts with the transmembrane regions of multi-pass transmembrane proteins in transit.

It localises to the mitochondrion inner membrane. In terms of biological role, component of the TIM22 complex, a complex that mediates the import and insertion of multi-pass transmembrane proteins into the mitochondrial inner membrane. The TIM22 complex forms a twin-pore translocase that uses the membrane potential as external driving force. This chain is Mitochondrial import inner membrane translocase subunit Tim9 (timm9), found in Dictyostelium discoideum (Social amoeba).